The following is a 420-amino-acid chain: Gamma-glutamyl phosphate reductase (420 aa).

The protein belongs to the gamma-glutamyl phosphate reductase family.

It is found in the cytoplasm. The catalysed reaction is L-glutamate 5-semialdehyde + phosphate + NADP(+) = L-glutamyl 5-phosphate + NADPH + H(+). It functions in the pathway amino-acid biosynthesis; L-proline biosynthesis; L-glutamate 5-semialdehyde from L-glutamate: step 2/2. Its function is as follows. Catalyzes the NADPH-dependent reduction of L-glutamate 5-phosphate into L-glutamate 5-semialdehyde and phosphate. The product spontaneously undergoes cyclization to form 1-pyrroline-5-carboxylate. The sequence is that of Gamma-glutamyl phosphate reductase from Neisseria meningitidis serogroup C (strain 053442).